The primary structure comprises 418 residues: Dihydrofolate synthase/folylpolyglutamate synthase (418 aa).

53 to 56 (GKGT) is a binding site for ATP. Mg(2+) is bound at residue S77. 7,8-dihydropteroate is bound at residue 116-119 (TYFE). Position 140 (E140) interacts with Mg(2+). 147–149 (LDA) is a binding site for 7,8-dihydropteroate. H167 contributes to the Mg(2+) binding site. ATP-binding residues include N252, R284, and D297.

It belongs to the folylpolyglutamate synthase family. As to quaternary structure, monomer. The cofactor is Mg(2+).

The enzyme catalyses 7,8-dihydropteroate + L-glutamate + ATP = 7,8-dihydrofolate + ADP + phosphate + H(+). It catalyses the reaction (6S)-5,6,7,8-tetrahydrofolyl-(gamma-L-Glu)(n) + L-glutamate + ATP = (6S)-5,6,7,8-tetrahydrofolyl-(gamma-L-Glu)(n+1) + ADP + phosphate + H(+). It carries out the reaction 10-formyltetrahydrofolyl-(gamma-L-Glu)(n) + L-glutamate + ATP = 10-formyltetrahydrofolyl-(gamma-L-Glu)(n+1) + ADP + phosphate + H(+). The catalysed reaction is (6R)-5,10-methylenetetrahydrofolyl-(gamma-L-Glu)(n) + L-glutamate + ATP = (6R)-5,10-methylenetetrahydrofolyl-(gamma-L-Glu)(n+1) + ADP + phosphate + H(+). Its pathway is cofactor biosynthesis; tetrahydrofolate biosynthesis; 7,8-dihydrofolate from 2-amino-4-hydroxy-6-hydroxymethyl-7,8-dihydropteridine diphosphate and 4-aminobenzoate: step 2/2. It participates in cofactor biosynthesis; tetrahydrofolylpolyglutamate biosynthesis. In terms of biological role, functions in two distinct reactions of the de novo folate biosynthetic pathway. Catalyzes the addition of a glutamate residue to dihydropteroate (7,8-dihydropteroate or H2Pte) to form dihydrofolate (7,8-dihydrofolate monoglutamate or H2Pte-Glu). Also catalyzes successive additions of L-glutamate to tetrahydrofolate or 10-formyltetrahydrofolate or 5,10-methylenetetrahydrofolate, leading to folylpolyglutamate derivatives. The protein is Dihydrofolate synthase/folylpolyglutamate synthase (folC) of Buchnera aphidicola subsp. Schizaphis graminum (strain Sg).